The sequence spans 229 residues: Potassium/proton antiporter CemA (229 aa).

4 helical membrane passes run 7 to 27, 106 to 126, 154 to 174, and 189 to 209; these read LASL…SLSF, IILH…YFFL, ILLV…ELMI, and IISG…KYWI.

It belongs to the CemA family.

Its subcellular location is the plastid. The protein resides in the chloroplast inner membrane. It catalyses the reaction K(+)(in) + H(+)(out) = K(+)(out) + H(+)(in). Contributes to K(+)/H(+) antiport activity by supporting proton efflux to control proton extrusion and homeostasis in chloroplasts in a light-dependent manner to modulate photosynthesis. Prevents excessive induction of non-photochemical quenching (NPQ) under continuous-light conditions. Indirectly promotes efficient inorganic carbon uptake into chloroplasts. In Phalaenopsis aphrodite subsp. formosana (Moth orchid), this protein is Potassium/proton antiporter CemA.